We begin with the raw amino-acid sequence, 356 residues long: Kelch domain-containing protein VC_1773 (356 aa).

4 Kelch repeats span residues 72–125 (KLYV…SLSP), 163–210 (TIFM…HKNN), 288–331 (NLYA…ASNG), and 333–355 (AMYVLGGENSNGDAMTRCLSLLM).

The polypeptide is Kelch domain-containing protein VC_1773 (Vibrio cholerae serotype O1 (strain ATCC 39315 / El Tor Inaba N16961)).